The following is a 660-amino-acid chain: Arginine--tRNA ligase, cytoplasmic (660 aa).

At methionine 1 the chain carries N-acetylmethionine. The interval 1–72 is could be involved in the assembly of the multisynthetase complex; the sequence is MDVLVSECSA…QAERNKPTKN (72 aa). L-arginine is bound by residues 200–202, histidine 211, tyrosine 384, aspartate 388, and glutamine 412; that span reads SPN. Positions 201–212 match the 'HIGH' region motif; that stretch reads PNIAKEMHVGHL. The interval 529-543 is interaction with tRNA; it reads NTAAYLLYAFTRIRS.

This sequence belongs to the class-I aminoacyl-tRNA synthetase family. In terms of assembly, interacts (via N-terminus) with AIMP1 (via N-terminus); this stimulates its catalytic activity. Interacts (via N-terminus) with LARS2 (via C-terminus). Monomer. Part of a multisubunit complex that groups tRNA ligases for Arg (RARS1), Asp (DARS1), Gln (QARS1), Ile (IARS1), Leu (LARS1), Lys (KARS1), Met (MARS1) the bifunctional ligase for Glu and Pro (EPRS1) and the auxiliary subunits AIMP1/p43, AIMP2/p38 and EEF1E1/p18. Interacts with QARS1. Part of a complex composed of RARS1, QARS1 and AIMP1.

The protein resides in the cytoplasm. Its subcellular location is the cytosol. The enzyme catalyses tRNA(Arg) + L-arginine + ATP = L-arginyl-tRNA(Arg) + AMP + diphosphate. Forms part of a macromolecular complex that catalyzes the attachment of specific amino acids to cognate tRNAs during protein synthesis. Modulates the secretion of AIMP1 and may be involved in generation of the inflammatory cytokine EMAP2 from AIMP1. The sequence is that of Arginine--tRNA ligase, cytoplasmic from Homo sapiens (Human).